Here is a 339-residue protein sequence, read N- to C-terminus: Protein-lysine N-methyltransferase EFM3 (339 aa).

Residues Trp-137 and 174–176 contribute to the S-adenosyl-L-methionine site; that span reads GAG. Position 177 is a phosphothreonine (Thr-177). Asp-199, Trp-233, and Ala-248 together coordinate S-adenosyl-L-methionine.

This sequence belongs to the class I-like SAM-binding methyltransferase superfamily. EEF2KMT family.

The protein resides in the cytoplasm. S-adenosyl-L-methionine-dependent protein-lysine N-methyltransferase that mono-, di- and trimethylates elongation factor 2 (EFT1/EFT2) at 'Lys-509'. The protein is Protein-lysine N-methyltransferase EFM3 of Saccharomyces cerevisiae (strain ATCC 204508 / S288c) (Baker's yeast).